A 1051-amino-acid polypeptide reads, in one-letter code: Eukaryotic translation initiation factor 3 subunit A (1051 aa).

Positions 92-121 (LKKFIELAEKKVTEAQAKADEIQSSLESAA) form a coiled coil. Positions 339–523 (MTKAASFVLL…GVLTFDTDIF (185 aa)) constitute a PCI domain. Positions 608 to 905 (RVLIEKKKEA…EAEARRAARK (298 aa)) form a coiled coil. Composition is skewed to basic and acidic residues over residues 617–632 (AATDALQRKQREEETR), 642–664 (EAEKQRLLDEQREREKKRLRDEQ), 794–901 (KEVS…EARR), and 916–926 (AELERPVERTA). Disordered stretches follow at residues 617 to 664 (AATD…RDEQ) and 794 to 1051 (KEVS…QQQQ). Low complexity-rich tracts occupy residues 948-961 (KEAAGAAPAPAAAE) and 1010-1039 (SSSSQPPSRTQTPPAAAPASSDKPEASPAP).

The protein belongs to the eIF-3 subunit A family. As to quaternary structure, component of the eukaryotic translation initiation factor 3 (eIF-3) complex.

It is found in the cytoplasm. In terms of biological role, RNA-binding component of the eukaryotic translation initiation factor 3 (eIF-3) complex, which is involved in protein synthesis of a specialized repertoire of mRNAs and, together with other initiation factors, stimulates binding of mRNA and methionyl-tRNAi to the 40S ribosome. The eIF-3 complex specifically targets and initiates translation of a subset of mRNAs involved in cell proliferation. This chain is Eukaryotic translation initiation factor 3 subunit A (tif32), found in Aspergillus fumigatus (strain CBS 144.89 / FGSC A1163 / CEA10) (Neosartorya fumigata).